Here is a 93-residue protein sequence, read N- to C-terminus: Probable chloroethene reductive dehalogenase membrane anchor protein (93 aa).

3 helical membrane-spanning segments follow: residues 3-23 (AIYFFLTIALAVGLTMLFTWF), 35-55 (WVLGILGLLLALFAIQHTYAS), and 64-84 (SAWIVGVIVLLLAVVPLLFAA).

This sequence belongs to the PceB family.

It localises to the cell membrane. Functionally, may act as a membrane anchor for the chloroethene reductive dehalogenase VcrA. The protein is Probable chloroethene reductive dehalogenase membrane anchor protein of Dehalococcoides mccartyi (strain VS).